A 371-amino-acid polypeptide reads, in one-letter code: Hsc70-interacting protein (371 aa).

The segment at 38–80 is disordered; it reads MGGKVPPATHKAKSEENTKEEKRDKTTEENIKTEELSSEESDL. Positions 49-72 are enriched in basic and acidic residues; that stretch reads AKSEENTKEEKRDKTTEENIKTEE. 3 TPR repeats span residues 113-146, 147-180, and 181-214; these read ANEKKGAAIEALNDGELQKAIDLFTDAIKLNPRL, AILYAKRASVFVKLQKPNAAIRDCDRAIEINPDS, and AQPYKWRGKAHRLLGHWEEAAHDLALACKLDYDE. Residues 255–271 are compositionally biased toward basic and acidic residues; it reads KAREEHERAQREEEARR. Residues 255-296 form a disordered region; the sequence is KAREEHERAQREEEARRQSGSQYGSFPGGFPGGMPGNFPGGM. Residues 280–296 are compositionally biased toward gly residues; it reads FPGGFPGGMPGNFPGGM. The STI1 domain occupies 321–360; sequence DPEVLAAMQDPEVMVAFQDVAQNPSNMSKYQSNPKVMNLI. Residue serine 348 is modified to Phosphoserine; by GRK5. 2 positions are modified to N6-acetyllysine: lysine 355 and lysine 362.

Belongs to the FAM10 family. In terms of assembly, homotetramer. Interacts with HSC70 as well as DNAJ homologs and HSP90. Interacts (via the C-terminus 302- 318 AA) with GRK5.

It is found in the cytoplasm. In terms of biological role, one HIP oligomer binds the ATPase domains of at least two HSC70 molecules dependent on activation of the HSC70 ATPase by HSP40. Stabilizes the ADP state of HSC70 that has a high affinity for substrate protein. Through its own chaperone activity, it may contribute to the interaction of HSC70 with various target proteins. This chain is Hsc70-interacting protein (St13), found in Mus musculus (Mouse).